We begin with the raw amino-acid sequence, 74 residues long: Small heat shock protein hspG10 (74 aa).

The 44-residue stretch at 31–74 folds into the sHSP domain; that stretch reads KTIIDILPSMDVTMTNDKLIIETELAGISKDHIEIDIKDSILTI.

The protein belongs to the small heat shock protein (HSP20) family.

In Dictyostelium discoideum (Social amoeba), this protein is Small heat shock protein hspG10 (hspG10).